A 638-amino-acid polypeptide reads, in one-letter code: Chaperone protein DnaK (638 aa).

Residue T198 is modified to Phosphothreonine; by autocatalysis. A disordered region spans residues 598-638 (YEASQKEAAEADAKADAAKDSDVVDADFEEIDEDDDKKKSA). The span at 601–619 (SQKEAAEADAKADAAKDSD) shows a compositional bias: basic and acidic residues. The span at 620–632 (VVDADFEEIDEDD) shows a compositional bias: acidic residues.

The protein belongs to the heat shock protein 70 family.

In terms of biological role, acts as a chaperone. This is Chaperone protein DnaK from Mesorhizobium japonicum (strain LMG 29417 / CECT 9101 / MAFF 303099) (Mesorhizobium loti (strain MAFF 303099)).